Reading from the N-terminus, the 164-residue chain is Protein-export protein SecB (164 aa).

The protein belongs to the SecB family. As to quaternary structure, homotetramer, a dimer of dimers. One homotetramer interacts with 1 SecA dimer.

It is found in the cytoplasm. In terms of biological role, one of the proteins required for the normal export of preproteins out of the cell cytoplasm. It is a molecular chaperone that binds to a subset of precursor proteins, maintaining them in a translocation-competent state. It also specifically binds to its receptor SecA. The polypeptide is Protein-export protein SecB (Rhodopseudomonas palustris (strain BisB18)).